The sequence spans 267 residues: tRNA pseudouridine synthase A (267 aa).

The Nucleophile role is filled by aspartate 53. Tyrosine 114 contacts substrate.

It belongs to the tRNA pseudouridine synthase TruA family. As to quaternary structure, homodimer.

The enzyme catalyses uridine(38/39/40) in tRNA = pseudouridine(38/39/40) in tRNA. Functionally, formation of pseudouridine at positions 38, 39 and 40 in the anticodon stem and loop of transfer RNAs. This chain is tRNA pseudouridine synthase A, found in Chlamydia muridarum (strain MoPn / Nigg).